The following is a 324-amino-acid chain: tRNA pseudouridine synthase B (324 aa).

The active-site Nucleophile is the D49. Residues 87 to 107 (RSTDDLEGQPTKTSDKRPSRE) form a disordered region.

The protein belongs to the pseudouridine synthase TruB family. Type 1 subfamily.

It carries out the reaction uridine(55) in tRNA = pseudouridine(55) in tRNA. Functionally, responsible for synthesis of pseudouridine from uracil-55 in the psi GC loop of transfer RNAs. This chain is tRNA pseudouridine synthase B, found in Brucella abortus (strain 2308).